The primary structure comprises 272 residues: Elongation factor Ts (272 aa).

The segment at 86–89 is involved in Mg(2+) ion dislocation from EF-Tu; it reads TDFV.

The protein belongs to the EF-Ts family.

The protein localises to the cytoplasm. Associates with the EF-Tu.GDP complex and induces the exchange of GDP to GTP. It remains bound to the aminoacyl-tRNA.EF-Tu.GTP complex up to the GTP hydrolysis stage on the ribosome. In Blochmanniella pennsylvanica (strain BPEN), this protein is Elongation factor Ts.